We begin with the raw amino-acid sequence, 878 residues long: NUT family member 2E (878 aa).

5 disordered regions span residues 273–324 (WSQG…DDSC), 417–511 (QKSQ…VPEE), 527–560 (LLGPSLGATGEPEKQREEGKVKQPQEEDWTPPDP), 622–757 (RLPP…EEEE), and 775–878 (WLPQ…HCSQ). 2 stretches are compositionally biased toward pro residues: residues 278–288 (PLPPPPPPAAQ) and 427–444 (CLPPPATPRLEPRGPPAP). 2 stretches are compositionally biased toward basic and acidic residues: residues 537–551 (EPEKQREEGKVKQPQ) and 622–631 (RLPPLKEKQH).

The protein belongs to the NUT family.

The chain is NUT family member 2E (NUTM2E) from Homo sapiens (Human).